We begin with the raw amino-acid sequence, 316 residues long: Retinol dehydrogenase 12 (316 aa).

46–52 is a binding site for NADP(+); it reads GANTGIG. Residue S175 coordinates substrate. The active-site Proton acceptor is the Y200.

Belongs to the short-chain dehydrogenases/reductases (SDR) family. As to expression, expressed in the retina.

It carries out the reaction all-trans-retinol + NADP(+) = all-trans-retinal + NADPH + H(+). The enzyme catalyses 11-cis-retinol + NADP(+) = 11-cis-retinal + NADPH + H(+). It catalyses the reaction 9-cis-retinol + NADP(+) = 9-cis-retinal + NADPH + H(+). The catalysed reaction is a 4-hydroxynonen-1-ol + NADP(+) = a 4-hydroxynonenal + NADPH + H(+). It carries out the reaction (E)-non-2-en-1-ol + NADP(+) = (E)-non-2-enal + NADPH + H(+). The enzyme catalyses (Z)-non-6-en-1-ol + NADP(+) = (Z)-non-6-enal + NADPH + H(+). It catalyses the reaction nonan-1-ol + NADP(+) = nonanal + NADPH + H(+). It participates in cofactor metabolism; retinol metabolism. Functionally, retinoids dehydrogenase/reductase with a clear preference for NADP. Displays high activity towards 9-cis, 11-cis and all-trans-retinal. Shows very weak activity towards 13-cis-retinol. Also exhibits activity, albeit with lower affinity than for retinaldehydes, towards lipid peroxidation products (C9 aldehydes) such as 4-hydroxynonenal and trans-2-nonenal. May play an important function in photoreceptor cells to detoxify 4-hydroxynonenal and potentially other toxic aldehyde products resulting from lipid peroxidation. Has no dehydrogenase activity towards steroids. The sequence is that of Retinol dehydrogenase 12 (RDH12) from Bos taurus (Bovine).